The chain runs to 377 residues: MLRALKTHAEAPIVVATRAASTNAEKLEEIRERLAKGPNFHDFVQNPDNTRNEWEQYDGKLRREKGEEQRLRLPPWLKTTIPVGKNYAKIKAQMRELKLSTVCEEARCPNIGECWGGGEHGTQTATIMLMGDTCTRGCRFCSVKTARKPPPLDVNEPVNTATAIASWGLDYIVLTSVDRDDLPDGGSEHIAETVREIKARNSNIFVECLVPDFRGNLECVKTIANSGLDVYAHNIETVEKLTPYVRDRRAHYRQTLQVLTEAKRFNPNLITKSSIMLGLGETDEEIENTLKDLREAGVDCVTLGQYMQPTNKHLKVIEYVTPEKFKHWEERGNELGFLYTASGPLVRSSYKAGEFFITSILENRKKRQNDTEVPKKQ.

[4Fe-4S] cluster is bound by residues Cys103, Cys108, Cys114, Cys134, Cys138, Cys141, and Ser349. In terms of domain architecture, Radical SAM core spans 119–338 (EHGTQTATIM…EERGNELGFL (220 aa)).

Belongs to the radical SAM superfamily. Lipoyl synthase family. [4Fe-4S] cluster is required as a cofactor.

It localises to the mitochondrion. It catalyses the reaction [[Fe-S] cluster scaffold protein carrying a second [4Fe-4S](2+) cluster] + N(6)-octanoyl-L-lysyl-[protein] + 2 oxidized [2Fe-2S]-[ferredoxin] + 2 S-adenosyl-L-methionine + 4 H(+) = [[Fe-S] cluster scaffold protein] + N(6)-[(R)-dihydrolipoyl]-L-lysyl-[protein] + 4 Fe(3+) + 2 hydrogen sulfide + 2 5'-deoxyadenosine + 2 L-methionine + 2 reduced [2Fe-2S]-[ferredoxin]. The protein operates within protein modification; protein lipoylation via endogenous pathway; protein N(6)-(lipoyl)lysine from octanoyl-[acyl-carrier-protein]: step 2/2. Catalyzes the radical-mediated insertion of two sulfur atoms into the C-6 and C-8 positions of the octanoyl moiety bound to the lipoyl domains of lipoate-dependent enzymes, thereby converting the octanoylated domains into lipoylated derivatives. This chain is Lipoyl synthase, mitochondrial, found in Drosophila melanogaster (Fruit fly).